The following is a 375-amino-acid chain: Putative F-box only protein 11 (375 aa).

An F-box domain is found at 1 to 46 (MVSVNLPWELVEEILCRVPPQSLVKFRTVCKQWNSLFDDNKFVNDH).

This is Putative F-box only protein 11 (FBX11) from Arabidopsis thaliana (Mouse-ear cress).